A 255-amino-acid polypeptide reads, in one-letter code: Hydroxyacylglutathione hydrolase (255 aa).

H56, H58, D60, H61, H114, D133, and H171 together coordinate Zn(2+).

It belongs to the metallo-beta-lactamase superfamily. Glyoxalase II family. In terms of assembly, monomer. Zn(2+) serves as cofactor.

The enzyme catalyses an S-(2-hydroxyacyl)glutathione + H2O = a 2-hydroxy carboxylate + glutathione + H(+). The protein operates within secondary metabolite metabolism; methylglyoxal degradation; (R)-lactate from methylglyoxal: step 2/2. Its function is as follows. Thiolesterase that catalyzes the hydrolysis of S-D-lactoyl-glutathione to form glutathione and D-lactic acid. The protein is Hydroxyacylglutathione hydrolase of Rhodopseudomonas palustris (strain HaA2).